The following is a 274-amino-acid chain: Thymidylate synthase (274 aa).

Position 21 (arginine 21) interacts with dUMP. Position 51 (histidine 51) interacts with (6R)-5,10-methylene-5,6,7,8-tetrahydrofolate. A dUMP-binding site is contributed by 123–124 (RR). Residue cysteine 156 is the Nucleophile of the active site. DUMP contacts are provided by residues 176-179 (RSAD), asparagine 187, and 217-219 (HIY). Aspartate 179 contacts (6R)-5,10-methylene-5,6,7,8-tetrahydrofolate. Residue serine 273 participates in (6R)-5,10-methylene-5,6,7,8-tetrahydrofolate binding.

Belongs to the thymidylate synthase family. Bacterial-type ThyA subfamily. In terms of assembly, homodimer.

It localises to the cytoplasm. The enzyme catalyses dUMP + (6R)-5,10-methylene-5,6,7,8-tetrahydrofolate = 7,8-dihydrofolate + dTMP. It participates in pyrimidine metabolism; dTTP biosynthesis. Its function is as follows. Catalyzes the reductive methylation of 2'-deoxyuridine-5'-monophosphate (dUMP) to 2'-deoxythymidine-5'-monophosphate (dTMP) while utilizing 5,10-methylenetetrahydrofolate (mTHF) as the methyl donor and reductant in the reaction, yielding dihydrofolate (DHF) as a by-product. This enzymatic reaction provides an intracellular de novo source of dTMP, an essential precursor for DNA biosynthesis. This Francisella tularensis subsp. novicida (strain U112) protein is Thymidylate synthase.